Reading from the N-terminus, the 780-residue chain is RNA-binding protein Pasilla (780 aa).

Disordered stretches follow at residues 31–50 (LQHQ…QQLE), 76–113 (QPRH…SSSI), and 150–190 (QIES…ATAS). Low complexity-rich tracts occupy residues 79–91 (HSTT…STHS), 99–113 (SSNS…SSSI), and 176–190 (PNGT…ATAS). KH domains lie at 273–340 (TYHM…MEFI), 366–432 (DKQV…CKMI), and 691–758 (KDSK…QYLI). The interval 674–693 (AQLGGLSKSPTPGDLSSKDS) is disordered. The segment at 686-776 (GDLSSKDSKN…TKRARQIPLT (91 aa)) is required for RNA binding.

In terms of tissue distribution, expressed in the central nervous system in mushroom body neurons (at protein level).

The protein resides in the nucleus. It localises to the cytoplasm. Functionally, functions to regulate alternative splicing in neurons by binding pre-mRNA in a sequence-specific manner to activate exon inclusion. Plays a role in long-term memory formation by processing the unspliced Orb2-isoform A (Orb2A) mRNA and thereby controlling Orb2A protein abundance. This is RNA-binding protein Pasilla from Drosophila melanogaster (Fruit fly).